Consider the following 210-residue polypeptide: Flagellar transcriptional regulator FlhC (210 aa).

Residues Cys144, Cys147, Cys164, and Cys167 each contribute to the Zn(2+) site.

The protein belongs to the FlhC family. In terms of assembly, heterohexamer composed of two FlhC and four FlhD subunits. Each FlhC binds a FlhD dimer, forming a heterotrimer, and a hexamer assembles by dimerization of two heterotrimers. The cofactor is Zn(2+).

Its subcellular location is the cytoplasm. Its function is as follows. Functions in complex with FlhD as a master transcriptional regulator that regulates transcription of several flagellar and non-flagellar operons by binding to their promoter region. Activates expression of class 2 flagellar genes, including fliA, which is a flagellum-specific sigma factor that turns on the class 3 genes. Also regulates genes whose products function in a variety of physiological pathways. The sequence is that of Flagellar transcriptional regulator FlhC from Cupriavidus pinatubonensis (strain JMP 134 / LMG 1197) (Cupriavidus necator (strain JMP 134)).